The sequence spans 139 residues: Large ribosomal subunit protein uL16 (139 aa).

Positions Met1–Gly19 are enriched in basic residues. A disordered region spans residues Met1–Thr25.

This sequence belongs to the universal ribosomal protein uL16 family. Part of the 50S ribosomal subunit.

Its function is as follows. Binds 23S rRNA and is also seen to make contacts with the A and possibly P site tRNAs. In Streptomyces griseus subsp. griseus (strain JCM 4626 / CBS 651.72 / NBRC 13350 / KCC S-0626 / ISP 5235), this protein is Large ribosomal subunit protein uL16.